The following is a 164-amino-acid chain: Ribosome maturation factor RimM (164 aa).

Residues 92-164 (PDSEYYVANL…FVVIVPPEFI (73 aa)) enclose the PRC barrel domain.

The protein belongs to the RimM family. As to quaternary structure, binds ribosomal protein uS19.

Its subcellular location is the cytoplasm. Its function is as follows. An accessory protein needed during the final step in the assembly of 30S ribosomal subunit, possibly for assembly of the head region. Essential for efficient processing of 16S rRNA. May be needed both before and after RbfA during the maturation of 16S rRNA. It has affinity for free ribosomal 30S subunits but not for 70S ribosomes. In Orientia tsutsugamushi (strain Ikeda) (Rickettsia tsutsugamushi), this protein is Ribosome maturation factor RimM.